The sequence spans 395 residues: Protein BUR2 (395 aa).

Disordered regions lie at residues 1-31 (MSAT…ASSG) and 372-395 (AKQE…KPKI). S24 is modified (phosphoserine).

In terms of assembly, belongs to the BUR kinase complex composed of SGV1/BUR1 and BUR2. Interacts with SGV1.

It is found in the nucleus. Functionally, component of the BUR kinase complex involved in transcription regulation. This complex phosphorylates 'Ser-120' of the UBC2/RAD6 ubiquitin-conjugating enzyme (E2), leading to monoubiquitination of histone H2B, the localization of the PAF1 complex to the chromatin, and the silencing of telomeric-associated genes. Also required for histone H3 'Lys-4' trimethylation. May phosphorylate the 'Ser-5' of the RBP1 carboxy-terminal domain (CTD) repeats. Necessary for the recovery from pheromone-induced growth arrest in the cell cycle G1 phase. Also required for vegetative growth itself. The kinase activity of the complex requires the presence of BUR2. Overexpression of BUR2 interferes with mitotic chromosome segregation. The protein is Protein BUR2 (BUR2) of Saccharomyces cerevisiae (strain ATCC 204508 / S288c) (Baker's yeast).